Consider the following 105-residue polypeptide: Large ribosomal subunit protein bL21 (105 aa).

It belongs to the bacterial ribosomal protein bL21 family. As to quaternary structure, part of the 50S ribosomal subunit. Contacts protein L20.

In terms of biological role, this protein binds to 23S rRNA in the presence of protein L20. The sequence is that of Large ribosomal subunit protein bL21 from Phocaeicola vulgatus (strain ATCC 8482 / DSM 1447 / JCM 5826 / CCUG 4940 / NBRC 14291 / NCTC 11154) (Bacteroides vulgatus).